We begin with the raw amino-acid sequence, 98 residues long: NADH-ubiquinone oxidoreductase chain 4L (98 aa).

Helical transmembrane passes span 1–21 (MPPIYINIILAYTASLVGLLM), 29–49 (SLLCLEGMMLSLFILATILSL), and 61–81 (IILLIFAGCETAVGLALLVMI).

Belongs to the complex I subunit 4L family. In terms of assembly, core subunit of respiratory chain NADH dehydrogenase (Complex I) which is composed of 45 different subunits.

The protein resides in the mitochondrion inner membrane. It catalyses the reaction a ubiquinone + NADH + 5 H(+)(in) = a ubiquinol + NAD(+) + 4 H(+)(out). Functionally, core subunit of the mitochondrial membrane respiratory chain NADH dehydrogenase (Complex I) which catalyzes electron transfer from NADH through the respiratory chain, using ubiquinone as an electron acceptor. Part of the enzyme membrane arm which is embedded in the lipid bilayer and involved in proton translocation. The polypeptide is NADH-ubiquinone oxidoreductase chain 4L (MT-ND4L) (Galeopterus variegatus (Malayan flying lemur)).